A 379-amino-acid chain; its full sequence is Succinyl-diaminopimelate desuccinylase (379 aa).

His70 is a Zn(2+) binding site. The active site involves Asp72. Residue Asp103 participates in Zn(2+) binding. Glu137 acts as the Proton acceptor in catalysis. Zn(2+) contacts are provided by Glu138, Glu166, and His352.

This sequence belongs to the peptidase M20A family. DapE subfamily. In terms of assembly, homodimer. Requires Zn(2+) as cofactor. It depends on Co(2+) as a cofactor.

It catalyses the reaction N-succinyl-(2S,6S)-2,6-diaminopimelate + H2O = (2S,6S)-2,6-diaminopimelate + succinate. The protein operates within amino-acid biosynthesis; L-lysine biosynthesis via DAP pathway; LL-2,6-diaminopimelate from (S)-tetrahydrodipicolinate (succinylase route): step 3/3. Catalyzes the hydrolysis of N-succinyl-L,L-diaminopimelic acid (SDAP), forming succinate and LL-2,6-diaminopimelate (DAP), an intermediate involved in the bacterial biosynthesis of lysine and meso-diaminopimelic acid, an essential component of bacterial cell walls. The chain is Succinyl-diaminopimelate desuccinylase from Shewanella baltica (strain OS195).